The following is a 103-amino-acid chain: Histone H4, major (103 aa).

Gly residues predominate over residues 1–12 (MAGGKGGKGMGK). The segment at 1–29 (MAGGKGGKGMGKVGAKRHSKRSNKASIEG) is disordered. 4 positions are modified to N6-acetyllysine: lysine 5, lysine 8, lysine 12, and lysine 16. Residues 14-23 (GAKRHSKRSN) are compositionally biased toward basic residues. The DNA-binding element occupies 16-21 (KRHSKR).

The protein belongs to the histone H4 family. In terms of assembly, the nucleosome is a histone octamer containing two molecules each of H2A, H2B, H3 and H4 assembled in one H3-H4 heterotetramer and two H2A-H2B heterodimers. The octamer wraps approximately 147 bp of DNA.

It localises to the nucleus. The protein resides in the chromosome. Its function is as follows. Core component of nucleosome. Nucleosomes wrap and compact DNA into chromatin, limiting DNA accessibility to the cellular machineries which require DNA as a template. Histones thereby play a central role in transcription regulation, DNA repair, DNA replication and chromosomal stability. DNA accessibility is regulated via a complex set of post-translational modifications of histones, also called histone code, and nucleosome remodeling. In Tetrahymena pyriformis, this protein is Histone H4, major.